The chain runs to 289 residues: Pantothenate synthetase (289 aa).

Residue 33–40 (MGYLHEGH) participates in ATP binding. His40 (proton donor) is an active-site residue. Gln70 provides a ligand contact to (R)-pantoate. Gln70 serves as a coordination point for beta-alanine. 157-160 (GEKD) serves as a coordination point for ATP. Gln163 contributes to the (R)-pantoate binding site. ATP is bound by residues Val186 and 194-197 (LSSR).

It belongs to the pantothenate synthetase family. In terms of assembly, homodimer.

It localises to the cytoplasm. The enzyme catalyses (R)-pantoate + beta-alanine + ATP = (R)-pantothenate + AMP + diphosphate + H(+). Its pathway is cofactor biosynthesis; (R)-pantothenate biosynthesis; (R)-pantothenate from (R)-pantoate and beta-alanine: step 1/1. Functionally, catalyzes the condensation of pantoate with beta-alanine in an ATP-dependent reaction via a pantoyl-adenylate intermediate. This Anaeromyxobacter dehalogenans (strain 2CP-C) protein is Pantothenate synthetase.